A 422-amino-acid chain; its full sequence is Glycine amidinotransferase, mitochondrial (422 aa).

The transit peptide at 1–37 directs the protein to the mitochondrion; that stretch reads MLRVRCLRGGSRGAEAAHFIGSRLGRAFTGWVQRSLQ. Active-site residues include Asp-253 and His-302. Catalysis depends on Cys-406, which acts as the Amidino-cysteine intermediate. The residue at position 416 (Thr-416) is a Phosphothreonine.

The protein belongs to the amidinotransferase family. As to quaternary structure, homodimer.

Its subcellular location is the mitochondrion inner membrane. The catalysed reaction is L-arginine + glycine = guanidinoacetate + L-ornithine. It functions in the pathway amine and polyamine biosynthesis; creatine biosynthesis; creatine from L-arginine and glycine: step 1/2. Functionally, catalyzes the biosynthesis of guanidinoacetate, the immediate precursor of creatine. Creatine plays a vital role in energy metabolism in muscle tissues. May play a role in embryonic and central nervous system development. In Gallus gallus (Chicken), this protein is Glycine amidinotransferase, mitochondrial.